The primary structure comprises 367 residues: Anthranilate phosphoribosyltransferase (367 aa).

5-phospho-alpha-D-ribose 1-diphosphate is bound by residues Gly-105, 108–109, Thr-113, 115–118, 133–141, and Gly-145; these read GD, NIST, and KHGNRAASS. Position 105 (Gly-105) interacts with anthranilate. Ser-117 is a Mg(2+) binding site. Asn-136 contributes to the anthranilate binding site. Anthranilate is bound at residue Arg-191. Asp-249 and Glu-250 together coordinate Mg(2+).

The protein belongs to the anthranilate phosphoribosyltransferase family. As to quaternary structure, homodimer. Requires Mg(2+) as cofactor.

The catalysed reaction is N-(5-phospho-beta-D-ribosyl)anthranilate + diphosphate = 5-phospho-alpha-D-ribose 1-diphosphate + anthranilate. It functions in the pathway amino-acid biosynthesis; L-tryptophan biosynthesis; L-tryptophan from chorismate: step 2/5. Catalyzes the transfer of the phosphoribosyl group of 5-phosphorylribose-1-pyrophosphate (PRPP) to anthranilate to yield N-(5'-phosphoribosyl)-anthranilate (PRA). This chain is Anthranilate phosphoribosyltransferase, found in Corynebacterium jeikeium (strain K411).